Reading from the N-terminus, the 64-residue chain is Large ribosomal subunit protein bL32 (64 aa).

Residues 1–35 (MAVQKSRVTPSRRGQRRSHDALTAKQLSTDPTSGE) are disordered.

The protein belongs to the bacterial ribosomal protein bL32 family.

The chain is Large ribosomal subunit protein bL32 from Xanthomonas axonopodis pv. citri (strain 306).